The following is a 444-amino-acid chain: Phosphoglucosamine mutase (444 aa).

Catalysis depends on Ser-102, which acts as the Phosphoserine intermediate. Positions 102, 241, 243, and 245 each coordinate Mg(2+). Position 102 is a phosphoserine (Ser-102).

The protein belongs to the phosphohexose mutase family. The cofactor is Mg(2+). Post-translationally, activated by phosphorylation.

It catalyses the reaction alpha-D-glucosamine 1-phosphate = D-glucosamine 6-phosphate. Catalyzes the conversion of glucosamine-6-phosphate to glucosamine-1-phosphate. This is Phosphoglucosamine mutase from Paracidovorax citrulli (strain AAC00-1) (Acidovorax citrulli).